The sequence spans 112 residues: Peptidyl-tRNA hydrolase (112 aa).

Residues 64–99 are disordered; the sequence is EEAKRAGLPTGLISDAGRTQLEPGTPTALAIGPAPD.

Belongs to the PTH2 family.

It localises to the cytoplasm. The catalysed reaction is an N-acyl-L-alpha-aminoacyl-tRNA + H2O = an N-acyl-L-amino acid + a tRNA + H(+). Its function is as follows. The natural substrate for this enzyme may be peptidyl-tRNAs which drop off the ribosome during protein synthesis. The sequence is that of Peptidyl-tRNA hydrolase from Halobacterium salinarum (strain ATCC 29341 / DSM 671 / R1).